Here is a 286-residue protein sequence, read N- to C-terminus: MTARELDAYFRSFLNFGPFVSCDVALNGLQVANSGAPVHKVAFAVDACAQSIDAAARAGARMLFVHHGLFWGRIEPLTGMQYRRVQALLTHDIALYAVHLPLDAHPQYGNNAGLAARVGLRQGGPFGFIRGTAVGLWGTVAENTTPSQEAMQQHAACTAPDTHRVTHANAISPSAGLSLQQVVHRLFPAEEQPVRLLPFGKQRIERVGILSGKAGTYLAEAIALDLDLFITGEIEHSCYHTAREHSISVIAGGHYQTETVGLQLVARKLQRDTGIETLFLDIPTGM.

A divalent metal cation-binding residues include histidine 66, histidine 67, aspartate 103, histidine 254, and glutamate 258.

The protein belongs to the GTP cyclohydrolase I type 2/NIF3 family. Homohexamer.

The polypeptide is GTP cyclohydrolase 1 type 2 homolog (Treponema pallidum (strain Nichols)).